We begin with the raw amino-acid sequence, 131 residues long: Sec-independent protein translocase protein TatB (131 aa).

Residues 2-22 (FDGIGFMELLLIGIVGLVVLG) form a helical membrane-spanning segment. Over residues 86–95 (LKEAAQSVNR) the composition is skewed to polar residues. Positions 86–131 (LKEAAQSVNRPYQVEDVPAAKDVPAKEMPTSETSTATNANSDKPNG) are disordered. Low complexity predominate over residues 115–131 (TSETSTATNANSDKPNG).

This sequence belongs to the TatB family. In terms of assembly, the Tat system comprises two distinct complexes: a TatABC complex, containing multiple copies of TatA, TatB and TatC subunits, and a separate TatA complex, containing only TatA subunits. Substrates initially bind to the TatABC complex, which probably triggers association of the separate TatA complex to form the active translocon.

The protein resides in the cell inner membrane. Its function is as follows. Part of the twin-arginine translocation (Tat) system that transports large folded proteins containing a characteristic twin-arginine motif in their signal peptide across membranes. Together with TatC, TatB is part of a receptor directly interacting with Tat signal peptides. TatB may form an oligomeric binding site that transiently accommodates folded Tat precursor proteins before their translocation. The chain is Sec-independent protein translocase protein TatB from Shewanella halifaxensis (strain HAW-EB4).